The chain runs to 696 residues: Macrolide export ATP-binding/permease protein MacB (696 aa).

The 239-residue stretch at 6-244 (IELKNIERYH…KPQNKRTFID (239 aa)) folds into the ABC transporter domain. 42–49 (GASGSGKS) contributes to the ATP binding site. Positions 254–287 (HNTEKLNRPNEKNNIDNDNKENNNGYNRNDNSFL) are disordered. Residues 255–274 (NTEKLNRPNEKNNIDNDNKE) are compositionally biased toward basic and acidic residues. The segment covering 275-284 (NNNGYNRNDN) has biased composition (low complexity). The next 4 helical transmembrane spans lie at 324 to 344 (FLTM…IALG), 576 to 596 (IAFI…LVSV), 626 to 646 (MVSL…GGLF), and 659 to 679 (LSSF…FGYF).

It belongs to the ABC transporter superfamily. Macrolide exporter (TC 3.A.1.122) family. Homodimer. Part of the tripartite efflux system MacAB-TolC, which is composed of an inner membrane transporter, MacB, a periplasmic membrane fusion protein, MacA, and an outer membrane component, TolC. The complex forms a large protein conduit and can translocate molecules across both the inner and outer membranes. Interacts with MacA.

The protein localises to the cell inner membrane. Its function is as follows. Part of the tripartite efflux system MacAB-TolC. MacB is a non-canonical ABC transporter that contains transmembrane domains (TMD), which form a pore in the inner membrane, and an ATP-binding domain (NBD), which is responsible for energy generation. Confers resistance against macrolides. The polypeptide is Macrolide export ATP-binding/permease protein MacB (Haemophilus ducreyi (strain 35000HP / ATCC 700724)).